The primary structure comprises 419 residues: Phospho-N-acetylmuramoyl-pentapeptide-transferase (419 aa).

Helical transmembrane passes span 22 to 42 (YVSF…TVIG), 72 to 92 (TPTM…LLLA), 99 to 119 (ILLM…DDYI), 135 to 155 (IIGQ…NPAV), 208 to 228 (VLFG…FISN), 238 to 258 (GLAT…AYVS), 278 to 298 (LTIF…YNAY), 303 to 323 (FMGD…ALII), 328 to 348 (LLPI…IQVF), and 396 to 416 (KITV…IATL).

Belongs to the glycosyltransferase 4 family. MraY subfamily. It depends on Mg(2+) as a cofactor.

The protein resides in the cell inner membrane. The catalysed reaction is UDP-N-acetyl-alpha-D-muramoyl-L-alanyl-gamma-D-glutamyl-meso-2,6-diaminopimeloyl-D-alanyl-D-alanine + di-trans,octa-cis-undecaprenyl phosphate = di-trans,octa-cis-undecaprenyl diphospho-N-acetyl-alpha-D-muramoyl-L-alanyl-D-glutamyl-meso-2,6-diaminopimeloyl-D-alanyl-D-alanine + UMP. The protein operates within cell wall biogenesis; peptidoglycan biosynthesis. Functionally, catalyzes the initial step of the lipid cycle reactions in the biosynthesis of the cell wall peptidoglycan: transfers peptidoglycan precursor phospho-MurNAc-pentapeptide from UDP-MurNAc-pentapeptide onto the lipid carrier undecaprenyl phosphate, yielding undecaprenyl-pyrophosphoryl-MurNAc-pentapeptide, known as lipid I. The polypeptide is Phospho-N-acetylmuramoyl-pentapeptide-transferase (Porphyromonas gingivalis (strain ATCC BAA-308 / W83)).